We begin with the raw amino-acid sequence, 154 residues long: Transcriptional repressor NrdR (154 aa).

A zinc finger spans residues 3–34; that stretch reads CPFCGANDTKVIDSRLVAEGEQVRRRRECVAC. An ATP-cone domain is found at 49-139; sequence PRLIKQDGTR…VYRRFQDLDE (91 aa).

This sequence belongs to the NrdR family. Zn(2+) is required as a cofactor.

Negatively regulates transcription of bacterial ribonucleotide reductase nrd genes and operons by binding to NrdR-boxes. The protein is Transcriptional repressor NrdR of Pseudomonas putida (strain W619).